A 774-amino-acid polypeptide reads, in one-letter code: Ion-translocating oxidoreductase complex subunit C (774 aa).

2 consecutive 4Fe-4S ferredoxin-type domains span residues 359 to 389 and 399 to 428; these read ELPE…QQLH and QLLA…VQYY. Residues Cys-369, Cys-372, Cys-375, Cys-379, Cys-408, Cys-411, Cys-414, and Cys-418 each contribute to the [4Fe-4S] cluster site. The span at 453-490 shows a compositional bias: basic and acidic residues; it reads EQRQARLRRDEERRAAERAQRAEKAALARAAQAEREEA. The interval 453-493 is disordered; that stretch reads EQRQARLRRDEERRAAERAQRAEKAALARAAQAEREEAAPA.

It belongs to the 4Fe4S bacterial-type ferredoxin family. RnfC subfamily. The complex is composed of six subunits: RnfA, RnfB, RnfC, RnfD, RnfE and RnfG. [4Fe-4S] cluster is required as a cofactor.

It is found in the cell inner membrane. Part of a membrane-bound complex that couples electron transfer with translocation of ions across the membrane. The polypeptide is Ion-translocating oxidoreductase complex subunit C (Pseudomonas aeruginosa (strain ATCC 15692 / DSM 22644 / CIP 104116 / JCM 14847 / LMG 12228 / 1C / PRS 101 / PAO1)).